The sequence spans 441 residues: Rho-associated protein kinase 1 (441 aa).

Positions 1-99 (NSKSQMDKDY…RLEQEVNEHK (99 aa)) form a coiled coil. Positions 114–353 (EAKSVAMCEM…TLSRLEETNS (240 aa)) are SHROOM3 binding. Residues 356-422 (TKDIELLRKE…LAEIMNRKDF (67 aa)) form the RhoBD domain. A coiled-coil region spans residues 418–441 (NRKDFKIDRKKANTQDLRKKKKKK).

Belongs to the protein kinase superfamily. AGC Ser/Thr protein kinase family. In terms of assembly, homodimer. Interacts with RHOA (activated by GTP), RHOB, RHOC, GEM, MYLC2B, RHOE, PPP1R12A, LIMK1, LIMK2, TSG101, CHORDC1, DAPK3, PFN1, PTEN and JIP3. Interacts with FHOD1 in a Src-dependent manner. Interacts with ITGB1BP1 (via N-terminus and PTB domain). Interacts with SHROOM3. It depends on Mg(2+) as a cofactor.

The protein localises to the cytoplasm. It is found in the golgi apparatus membrane. Its subcellular location is the cytoskeleton. It localises to the microtubule organizing center. The protein resides in the centrosome. The protein localises to the centriole. It is found in the cell projection. Its subcellular location is the bleb. It localises to the cell membrane. The protein resides in the lamellipodium. The protein localises to the ruffle. It catalyses the reaction L-seryl-[protein] + ATP = O-phospho-L-seryl-[protein] + ADP + H(+). It carries out the reaction L-threonyl-[protein] + ATP = O-phospho-L-threonyl-[protein] + ADP + H(+). Activated by RHOA binding. Inhibited by Y-27632. Its function is as follows. Protein kinase which is a key regulator of the actin cytoskeleton and cell polarity. Involved in regulation of smooth muscle contraction, actin cytoskeleton organization, stress fiber and focal adhesion formation, neurite retraction, cell adhesion and motility via phosphorylation of DAPK3, GFAP, LIMK1, LIMK2, MYL9/MLC2, TPPP, PFN1 and PPP1R12A. Phosphorylates FHOD1 and acts synergistically with it to promote SRC-dependent non-apoptotic plasma membrane blebbing. Phosphorylates JIP3 and regulates the recruitment of JNK to JIP3 upon UVB-induced stress. Acts as a suppressor of inflammatory cell migration by regulating PTEN phosphorylation and stability. Acts as a negative regulator of VEGF-induced angiogenic endothelial cell activation. Required for centrosome positioning and centrosome-dependent exit from mitosis. Plays a role in terminal erythroid differentiation. Inhibits podocyte motility via regulation of actin cytoskeletal dynamics and phosphorylation of CFL1. Promotes keratinocyte terminal differentiation. Involved in osteoblast compaction through the fibronectin fibrillogenesis cell-mediated matrix assembly process, essential for osteoblast mineralization. May regulate closure of the eyelids and ventral body wall by inducing the assembly of actomyosin bundles. The chain is Rho-associated protein kinase 1 (ROCK1) from Bos taurus (Bovine).